The sequence spans 453 residues: tRNA modification GTPase MnmE (453 aa).

(6S)-5-formyl-5,6,7,8-tetrahydrofolate contacts are provided by Arg22, Glu79, and Lys119. A TrmE-type G domain is found at 215–376 (GMKVVIAGRP…LKLHLKSLMG (162 aa)). Asn225 contributes to the K(+) binding site. Residues 225–230 (NAGKSS), 244–250 (TEIAGTT), 269–272 (DTAG), and 334–337 (NKAD) contribute to the GTP site. Position 229 (Ser229) interacts with Mg(2+). K(+) is bound by residues Thr244, Ile246, and Thr249. Thr250 lines the Mg(2+) pocket. Residue Lys453 participates in (6S)-5-formyl-5,6,7,8-tetrahydrofolate binding.

It belongs to the TRAFAC class TrmE-Era-EngA-EngB-Septin-like GTPase superfamily. TrmE GTPase family. Homodimer. Heterotetramer of two MnmE and two MnmG subunits. K(+) serves as cofactor.

The protein localises to the cytoplasm. Functionally, exhibits a very high intrinsic GTPase hydrolysis rate. Involved in the addition of a carboxymethylaminomethyl (cmnm) group at the wobble position (U34) of certain tRNAs, forming tRNA-cmnm(5)s(2)U34. This Shewanella putrefaciens (strain CN-32 / ATCC BAA-453) protein is tRNA modification GTPase MnmE.